The sequence spans 215 residues: FMN-dependent NADH:quinone oxidoreductase 1 (215 aa).

Belongs to the azoreductase type 1 family. As to quaternary structure, homodimer. FMN serves as cofactor.

The catalysed reaction is 2 a quinone + NADH + H(+) = 2 a 1,4-benzosemiquinone + NAD(+). It carries out the reaction N,N-dimethyl-1,4-phenylenediamine + anthranilate + 2 NAD(+) = 2-(4-dimethylaminophenyl)diazenylbenzoate + 2 NADH + 2 H(+). Quinone reductase that provides resistance to thiol-specific stress caused by electrophilic quinones. Functionally, also exhibits azoreductase activity. Catalyzes the reductive cleavage of the azo bond in aromatic azo compounds to the corresponding amines. The protein is FMN-dependent NADH:quinone oxidoreductase 1 of Lactiplantibacillus plantarum (strain ATCC BAA-793 / NCIMB 8826 / WCFS1) (Lactobacillus plantarum).